A 79-amino-acid polypeptide reads, in one-letter code: Acyl carrier protein (79 aa).

Residues 2–77 form the Carrier domain; sequence SDIEARVKKI…LAIDYAKNNV (76 aa). An O-(pantetheine 4'-phosphoryl)serine modification is found at S37.

It belongs to the acyl carrier protein (ACP) family. 4'-phosphopantetheine is transferred from CoA to a specific serine of apo-ACP by AcpS. This modification is essential for activity because fatty acids are bound in thioester linkage to the sulfhydryl of the prosthetic group.

It localises to the cytoplasm. It participates in lipid metabolism; fatty acid biosynthesis. Functionally, carrier of the growing fatty acid chain in fatty acid biosynthesis. This chain is Acyl carrier protein, found in Leptothrix cholodnii (strain ATCC 51168 / LMG 8142 / SP-6) (Leptothrix discophora (strain SP-6)).